The sequence spans 244 residues: 5-oxoprolinase subunit A (244 aa).

It belongs to the LamB/PxpA family. As to quaternary structure, forms a complex composed of PxpA, PxpB and PxpC.

It carries out the reaction 5-oxo-L-proline + ATP + 2 H2O = L-glutamate + ADP + phosphate + H(+). Functionally, catalyzes the cleavage of 5-oxoproline to form L-glutamate coupled to the hydrolysis of ATP to ADP and inorganic phosphate. The protein is 5-oxoprolinase subunit A of Citrobacter koseri (strain ATCC BAA-895 / CDC 4225-83 / SGSC4696).